Consider the following 463-residue polypeptide: D(5)-like dopamine receptor (463 aa).

Residues 1-39 (MENFYNETEPTEPRGGVDPLRVVTAAEDVPAPVGGVSVR) are Extracellular-facing. Asn-6 carries an N-linked (GlcNAc...) asparagine glycan. Residues 40-65 (ALTGCVLCALIVSTLLGNTLVCAAVI) form a helical membrane-spanning segment. Residues 66-76 (KFRHLRSKVTN) lie on the Cytoplasmic side of the membrane. The chain crosses the membrane as a helical span at residues 77 to 103 (AFVVSLAVSDLFVAVLVMPWRAVSEVA). Topologically, residues 104-112 (GVWLFGRFC) are extracellular. An intrachain disulfide couples Cys-112 to Cys-194. Residues 113 to 135 (DTWVAFDIMCSTASILNLCVISM) traverse the membrane as a helical segment. The Cytoplasmic portion of the chain corresponds to 136–154 (DRYWAISNPFRYERRMTRR). Residues 155–180 (FAFLMIAVAWTLSVLISFIPVQLNWH) traverse the membrane as a helical segment. Residues 181 to 198 (RADNNSSAHEQGDCNASL) are Extracellular-facing. The helical transmembrane segment at 199–223 (NRTYAISSSLISFYIPVLIMVGTYT) threads the bilayer. Residues 224-273 (RIFRIAQTQIRRISSLERAAGQRAQNQSHRASTHDESALKTSFKRETKVL) are Cytoplasmic-facing. The helical transmembrane segment at 274 to 301 (KTLSVIMGVFVFCWLPFFVLNCVVPFCD) threads the bilayer. Topologically, residues 302–315 (VDKVGEPPCVSDTT) are extracellular. A helical transmembrane segment spans residues 316–337 (FNIFVWFGWANSSLNPVIYAFN). The Cytoplasmic segment spans residues 338–463 (ADFRKAFTTI…PGQIQDLGDL (126 aa)).

It belongs to the G-protein coupled receptor 1 family.

It localises to the cell membrane. Functionally, receptor for dopamine. The polypeptide is D(5)-like dopamine receptor (dl) (Takifugu rubripes (Japanese pufferfish)).